The following is a 308-amino-acid chain: Protein translocase subunit SecF (308 aa).

The next 6 helical transmembrane spans lie at 10–30 (LFFAISLAMIIPGLIVMAIFG), 129–149 (LAVSIAALAVIIYITWAFRGV), 160–180 (IIAMIHDVLVVISLVSIGGVL), 181–201 (FGWQVDALFLTALLSVIGFSV), 241–261 (TQLMTVEYMLLAIALFGGITL), and 264–284 (FAIILLVGLFMGTYSSIFIAA).

The protein belongs to the SecD/SecF family. SecF subfamily. Forms a complex with SecD. Part of the essential Sec protein translocation apparatus which comprises SecA, SecYEG and auxiliary proteins SecDF. Other proteins may also be involved.

Its subcellular location is the cell membrane. In terms of biological role, part of the Sec protein translocase complex. Interacts with the SecYEG preprotein conducting channel. SecDF uses the proton motive force (PMF) to complete protein translocation after the ATP-dependent function of SecA. The sequence is that of Protein translocase subunit SecF from Anaerolinea thermophila (strain DSM 14523 / JCM 11388 / NBRC 100420 / UNI-1).